The following is a 283-amino-acid chain: Protein FAM78A (283 aa).

It belongs to the FAM78 family.

The protein is Protein FAM78A (Fam78a) of Mus musculus (Mouse).